A 213-amino-acid polypeptide reads, in one-letter code: MAQINVIGQNGGRSIDLDLPEVNPHVLHEVVTWQLAGRRRGTASTKTRAEVSRSGKKMYSQKGTGNARHGDRSVPTFVGGGVAFGPKPRSYSYTLPRKVRQLGLAMALADRQQQGKLTAVDGFGLDGKTKSFVSWAKENGLDGSERVLIVTDDELTRRAARNVAWATVLPVAGLNVYDILRHERLVIDAVALEPAQELETVPAEGNVQEGAAL.

The interval 41–75 is disordered; it reads GTASTKTRAEVSRSGKKMYSQKGTGNARHGDRSVP.

It belongs to the universal ribosomal protein uL4 family. In terms of assembly, part of the 50S ribosomal subunit.

Its function is as follows. One of the primary rRNA binding proteins, this protein initially binds near the 5'-end of the 23S rRNA. It is important during the early stages of 50S assembly. It makes multiple contacts with different domains of the 23S rRNA in the assembled 50S subunit and ribosome. In terms of biological role, forms part of the polypeptide exit tunnel. The protein is Large ribosomal subunit protein uL4 of Deinococcus geothermalis (strain DSM 11300 / CIP 105573 / AG-3a).